Reading from the N-terminus, the 313-residue chain is D-beta-D-heptose 7-phosphate kinase (313 aa).

ATP is bound at residue 196 to 199; sequence NRAE. D264 is an active-site residue.

It catalyses the reaction D-glycero-beta-D-manno-heptose 7-phosphate + ATP = D-glycero-beta-D-manno-heptose 1,7-bisphosphate + ADP + H(+). Its pathway is nucleotide-sugar biosynthesis; ADP-L-glycero-beta-D-manno-heptose biosynthesis; ADP-L-glycero-beta-D-manno-heptose from D-glycero-beta-D-manno-heptose 7-phosphate: step 1/4. It functions in the pathway bacterial outer membrane biogenesis; LPS core biosynthesis. In terms of biological role, catalyzes the phosphorylation of D-glycero-D-manno-heptose 7-phosphate at the C-1 position to selectively form D-glycero-beta-D-manno-heptose-1,7-bisphosphate. In Bordetella bronchiseptica (strain ATCC BAA-588 / NCTC 13252 / RB50) (Alcaligenes bronchisepticus), this protein is D-beta-D-heptose 7-phosphate kinase (rfaE).